Consider the following 82-residue polypeptide: Small ribosomal subunit protein bS18 (82 aa).

This sequence belongs to the bacterial ribosomal protein bS18 family. As to quaternary structure, part of the 30S ribosomal subunit. Forms a tight heterodimer with protein bS6.

In terms of biological role, binds as a heterodimer with protein bS6 to the central domain of the 16S rRNA, where it helps stabilize the platform of the 30S subunit. The chain is Small ribosomal subunit protein bS18 from Chlamydia pneumoniae (Chlamydophila pneumoniae).